We begin with the raw amino-acid sequence, 67 residues long: MDIVDIRSKTSDELRELLASLRKELVDAVLNRKIDKSGNHFYCVNIKRDIARVLTVLNERKKEERHV.

Belongs to the universal ribosomal protein uL29 family.

This is Large ribosomal subunit protein uL29 from Ehrlichia canis (strain Jake).